The following is a 23-amino-acid chain: Basic phospholipase A2 Smb-N6 (23 aa).

This sequence belongs to the phospholipase A2 family. Group II subfamily. It depends on Ca(2+) as a cofactor. Contains 7 disulfide bonds. As to expression, expressed by the venom gland.

Its subcellular location is the secreted. The enzyme catalyses a 1,2-diacyl-sn-glycero-3-phosphocholine + H2O = a 1-acyl-sn-glycero-3-phosphocholine + a fatty acid + H(+). Snake venom phospholipase A2 (PLA2) that shows myotoxic activities. PLA2 catalyzes the calcium-dependent hydrolysis of the 2-acyl groups in 3-sn-phosphoglycerides. In Sistrurus miliarius barbouri (Dusky pigmy rattlesnake), this protein is Basic phospholipase A2 Smb-N6.